Here is a 271-residue protein sequence, read N- to C-terminus: Glutamate racemase (271 aa).

Residues 10 to 11 (DS) and 42 to 43 (YG) contribute to the substrate site. Cys-74 (proton donor/acceptor) is an active-site residue. 75–76 (NT) is a binding site for substrate. The active-site Proton donor/acceptor is Cys-189. 190–191 (TH) provides a ligand contact to substrate.

This sequence belongs to the aspartate/glutamate racemases family.

It carries out the reaction L-glutamate = D-glutamate. It functions in the pathway cell wall biogenesis; peptidoglycan biosynthesis. Provides the (R)-glutamate required for cell wall biosynthesis. The chain is Glutamate racemase from Bartonella bacilliformis (strain ATCC 35685 / KC583 / Herrer 020/F12,63).